A 227-amino-acid chain; its full sequence is NDR1/HIN1-like protein 10 (227 aa).

The helical transmembrane segment at 42–62 threads the bilayer; that stretch reads VKVIISLIVILGVAALIFWLI. Residues N138 and N210 are each glycosylated (N-linked (GlcNAc...) asparagine).

In terms of tissue distribution, expressed in senescing leaves.

The protein localises to the cell membrane. In terms of biological role, may play a role in plant immunity. The polypeptide is NDR1/HIN1-like protein 10 (Arabidopsis thaliana (Mouse-ear cress)).